Reading from the N-terminus, the 373-residue chain is Cobalt-precorrin-5B C(1)-methyltransferase (373 aa).

Belongs to the CbiD family.

It catalyses the reaction Co-precorrin-5B + S-adenosyl-L-methionine = Co-precorrin-6A + S-adenosyl-L-homocysteine. It participates in cofactor biosynthesis; adenosylcobalamin biosynthesis; cob(II)yrinate a,c-diamide from sirohydrochlorin (anaerobic route): step 6/10. Its function is as follows. Catalyzes the methylation of C-1 in cobalt-precorrin-5B to form cobalt-precorrin-6A. This Listeria monocytogenes serovar 1/2a (strain ATCC BAA-679 / EGD-e) protein is Cobalt-precorrin-5B C(1)-methyltransferase.